Consider the following 332-residue polypeptide: MLALGKLLDLTLAGREPTEKIQLTADGTRLHWLAEGALEVTPIGARDNGVDLLLSAGIHGNETAPIELLERLVRKLASGELKPAARVLFLLGNPEAIRRGERFVEQDMNRLFNGRHEEGSGNEAFRAAELERLAQVFFSRGERDRLHYDLHTAIRGSRIEQFALYPWAEGREHSRAELARLRDAGIEAVLLQNKPGITFSAYTYGQLGAEAFTLELGKARPFGQNQQVNLERLERRLEMLIDGSEERPDGAHLDGLKLFSVSREVIKHSDHFRLHLDDDVANFTELSPGYLLAEDIGGTRWVVDEVGARIIFPNPRVKNGLRAGILVVPAKL.

The Zn(2+) site is built by histidine 59, glutamate 62, and histidine 151. Glutamate 215 is a catalytic residue.

Belongs to the AspA/AstE family. Succinylglutamate desuccinylase subfamily. Zn(2+) is required as a cofactor.

The catalysed reaction is N-succinyl-L-glutamate + H2O = L-glutamate + succinate. It participates in amino-acid degradation; L-arginine degradation via AST pathway; L-glutamate and succinate from L-arginine: step 5/5. Transforms N(2)-succinylglutamate into succinate and glutamate. The polypeptide is Succinylglutamate desuccinylase (Pseudomonas paraeruginosa (strain DSM 24068 / PA7) (Pseudomonas aeruginosa (strain PA7))).